The following is an 816-amino-acid chain: Leucine--tRNA ligase (816 aa).

A 'HIGH' region motif is present at residues 46-56 (PYPSGALHMGH). The short motif at 638 to 642 (KMSKS) is the 'KMSKS' region element. Lys641 lines the ATP pocket.

The protein belongs to the class-I aminoacyl-tRNA synthetase family.

The protein resides in the cytoplasm. It catalyses the reaction tRNA(Leu) + L-leucine + ATP = L-leucyl-tRNA(Leu) + AMP + diphosphate. The protein is Leucine--tRNA ligase of Xanthomonas campestris pv. campestris (strain ATCC 33913 / DSM 3586 / NCPPB 528 / LMG 568 / P 25).